The chain runs to 303 residues: THAP domain-containing protein 11 (303 aa).

Residues Cys6 to His64 form a THAP-type zinc finger. Disordered stretches follow at residues Val85–Thr132 and Ser155–Val174. Residues Arg93–Thr132 show a composition bias toward low complexity. The HCFC1-binding motif (HBM) signature appears at Asp232–Tyr235. Residues Glu244–Met294 adopt a coiled-coil conformation.

The protein belongs to the THAP11 family. As to quaternary structure, forms homodimers. Interacts via HBM with HCFC1. Forms a complex with HCFC1 and ZNF143.

Its subcellular location is the nucleus. It is found in the cytoplasm. Transcription factor, which has both transcriptional activation and repression activities. Also modulates chromatin accessibility. In complex with HCFC1 and ZNF143, regulates the expression of several genes, including AP2S1, ESCO2, OPHN1, RBL1, UBXN8 and ZNF32. May regulate the expression of genes that encode both cytoplasmic and mitochondrial ribosomal proteins. Required for normal mitochondrial development and function. Regulates mitochondrial gene expression, including that of components of the electron transport chain. Involved in the maintainance of pluripotency in early embryonic cells, possibly through its action on mitochondrial maturation which is required to meet high energy demands of these cells. Required for early development of retina, preventing premature exit of retinal progenitor cells from the cell cycle. This effect may also be mediated by its action on mitochondria. Through the regulation of MMACHC gene expression, controls cobalamin metabolism. Required for normal brain development and neural precursor differentiation. Involved in cell growth. This Bos taurus (Bovine) protein is THAP domain-containing protein 11 (THAP11).